The following is an 882-amino-acid chain: Alanine--tRNA ligase (882 aa).

Positions 568, 572, 670, and 674 each coordinate Zn(2+).

It belongs to the class-II aminoacyl-tRNA synthetase family. Zn(2+) is required as a cofactor.

The protein localises to the cytoplasm. The enzyme catalyses tRNA(Ala) + L-alanine + ATP = L-alanyl-tRNA(Ala) + AMP + diphosphate. Functionally, catalyzes the attachment of alanine to tRNA(Ala) in a two-step reaction: alanine is first activated by ATP to form Ala-AMP and then transferred to the acceptor end of tRNA(Ala). Also edits incorrectly charged Ser-tRNA(Ala) and Gly-tRNA(Ala) via its editing domain. The protein is Alanine--tRNA ligase of Syntrophotalea carbinolica (strain DSM 2380 / NBRC 103641 / GraBd1) (Pelobacter carbinolicus).